We begin with the raw amino-acid sequence, 164 residues long: UPF0304 protein YPDSF_1971 (164 aa).

The protein belongs to the UPF0304 family.

The polypeptide is UPF0304 protein YPDSF_1971 (Yersinia pestis (strain Pestoides F)).